We begin with the raw amino-acid sequence, 133 residues long: Ribonuclease P protein component (133 aa).

The protein belongs to the RnpA family. In terms of assembly, consists of a catalytic RNA component (M1 or rnpB) and a protein subunit.

The enzyme catalyses Endonucleolytic cleavage of RNA, removing 5'-extranucleotides from tRNA precursor.. Functionally, RNaseP catalyzes the removal of the 5'-leader sequence from pre-tRNA to produce the mature 5'-terminus. It can also cleave other RNA substrates such as 4.5S RNA. The protein component plays an auxiliary but essential role in vivo by binding to the 5'-leader sequence and broadening the substrate specificity of the ribozyme. This is Ribonuclease P protein component from Pseudomonas entomophila (strain L48).